A 249-amino-acid chain; its full sequence is Triosephosphate isomerase (249 aa).

Substrate is bound by residues Asn-12 and Lys-14. Lys-14 bears the N6-acetyllysine mark. At Ser-21 the chain carries Phosphoserine. Tyr-68 bears the 3'-nitrotyrosine mark. Ser-80 carries the phosphoserine modification. His-96 functions as the Electrophile in the catalytic mechanism. Position 106 is a phosphoserine (Ser-106). A Glycyl lysine isopeptide (Lys-Gly) (interchain with G-Cter in SUMO1) cross-link involves residue Lys-142. At Lys-149 the chain carries N6-succinyllysine. Lys-156 is subject to N6-acetyllysine; alternate. Lys-156 bears the N6-succinyllysine; alternate mark. Phosphoserine is present on Ser-159. The active-site Proton acceptor is Glu-166. Thr-173 carries the phosphothreonine modification. An N6-acetyllysine; alternate modification is found at Lys-194. An N6-succinyllysine; alternate modification is found at Lys-194. Lys-194 carries the N6-methyllysine; alternate modification. Position 198 is a phosphoserine (Ser-198). 3'-nitrotyrosine is present on Tyr-209. Ser-212 carries the phosphoserine modification. Thr-214 is modified (phosphothreonine). Ser-223 carries the phosphoserine modification. Residue Lys-238 is modified to N6-acetyllysine.

Belongs to the triosephosphate isomerase family. As to quaternary structure, homodimer.

The protein localises to the cytoplasm. The catalysed reaction is D-glyceraldehyde 3-phosphate = dihydroxyacetone phosphate. It carries out the reaction dihydroxyacetone phosphate = methylglyoxal + phosphate. It functions in the pathway carbohydrate degradation; glycolysis; D-glyceraldehyde 3-phosphate from glycerone phosphate: step 1/1. The protein operates within carbohydrate biosynthesis; gluconeogenesis. Functionally, triosephosphate isomerase is an extremely efficient metabolic enzyme that catalyzes the interconversion between dihydroxyacetone phosphate (DHAP) and D-glyceraldehyde-3-phosphate (G3P) in glycolysis and gluconeogenesis. It is also responsible for the non-negligible production of methylglyoxal a reactive cytotoxic side-product that modifies and can alter proteins, DNA and lipids. The chain is Triosephosphate isomerase (TPI1) from Homo sapiens (Human).